A 638-amino-acid polypeptide reads, in one-letter code: Pentatricopeptide repeat-containing protein At3g49730 (638 aa).

PPR repeat units lie at residues 130–164 (SYEV…NPEL), 166–200 (EPEL…GLEP), 201–231 (DEYV…MREK), 235–269 (NLRY…GLEP), 270–304 (DIVV…GFEP), 305–340 (NVNC…GCEA), 341–375 (DIVT…GVMP), 376–410 (SQVT…GCHP), 411–445 (DLLI…GLSP), 446–480 (GVDT…GIFS), 483–513 (QYGT…ISNK), and 520–554 (NVSA…DLMP). The segment at 604-638 (LIEKAKPKGNKEGKKKGTDHQRYKGRGERSRAKAL) is disordered.

This sequence belongs to the PPR family. P subfamily.

The sequence is that of Pentatricopeptide repeat-containing protein At3g49730 from Arabidopsis thaliana (Mouse-ear cress).